The primary structure comprises 292 residues: NAD kinase (292 aa).

The Proton acceptor role is filled by aspartate 64. Residues 64–65, 138–139, arginine 149, arginine 166, aspartate 168, 179–184, and glutamine 238 each bind NAD(+); these read DG, ND, and TGYAVS.

It belongs to the NAD kinase family. A divalent metal cation serves as cofactor.

It localises to the cytoplasm. It catalyses the reaction NAD(+) + ATP = ADP + NADP(+) + H(+). Involved in the regulation of the intracellular balance of NAD and NADP, and is a key enzyme in the biosynthesis of NADP. Catalyzes specifically the phosphorylation on 2'-hydroxyl of the adenosine moiety of NAD to yield NADP. This Oleidesulfovibrio alaskensis (strain ATCC BAA-1058 / DSM 17464 / G20) (Desulfovibrio alaskensis) protein is NAD kinase.